Reading from the N-terminus, the 426-residue chain is Colanic acid biosynthesis protein WcaK (426 aa).

The protein belongs to the polysaccharide pyruvyl transferase family.

It functions in the pathway slime biogenesis; slime polysaccharide biosynthesis. The chain is Colanic acid biosynthesis protein WcaK (wcaK) from Escherichia coli (strain K12).